Consider the following 374-residue polypeptide: 4-hydroxy-3-methylbut-2-en-1-yl diphosphate synthase (flavodoxin) (374 aa).

Positions 268, 271, 303, and 310 each coordinate [4Fe-4S] cluster.

It belongs to the IspG family. It depends on [4Fe-4S] cluster as a cofactor.

It catalyses the reaction (2E)-4-hydroxy-3-methylbut-2-enyl diphosphate + oxidized [flavodoxin] + H2O + 2 H(+) = 2-C-methyl-D-erythritol 2,4-cyclic diphosphate + reduced [flavodoxin]. Its pathway is isoprenoid biosynthesis; isopentenyl diphosphate biosynthesis via DXP pathway; isopentenyl diphosphate from 1-deoxy-D-xylulose 5-phosphate: step 5/6. In terms of biological role, converts 2C-methyl-D-erythritol 2,4-cyclodiphosphate (ME-2,4cPP) into 1-hydroxy-2-methyl-2-(E)-butenyl 4-diphosphate. This is 4-hydroxy-3-methylbut-2-en-1-yl diphosphate synthase (flavodoxin) from Geobacillus kaustophilus (strain HTA426).